The following is a 502-amino-acid chain: Sodium/proline symporter (502 aa).

The next 13 helical transmembrane spans lie at 6–26 (PMLV…FIAW), 42–62 (LGPF…WLLM), 68–88 (IFLS…GAWI), 127–147 (IISA…GIVA), 163–183 (ALWA…FLAV), 192–212 (SLMI…VGGF), 235–255 (FVAI…PHIL), 276–296 (TWMI…IAYF), 320–340 (ILFN…AVMS), 371–391 (LVWV…ALAA), 398–418 (LGLV…VVLF), 430–450 (ALAG…YGWL), and 452–472 (LYEI…FSLL).

This sequence belongs to the sodium:solute symporter (SSF) (TC 2.A.21) family.

The protein resides in the cell inner membrane. The catalysed reaction is L-proline(in) + Na(+)(in) = L-proline(out) + Na(+)(out). Functionally, catalyzes the sodium-dependent uptake of extracellular L-proline. The protein is Sodium/proline symporter of Salmonella typhimurium (strain LT2 / SGSC1412 / ATCC 700720).